Consider the following 922-residue polypeptide: DNA gyrase subunit A (922 aa).

Residues 1–14 (MTETPTDGGSTPPS) are compositionally biased toward low complexity. Positions 1-24 (MTETPTDGGSTPPSDGGGPGGRIE) are disordered. A Topo IIA-type catalytic domain is found at 49 to 518 (LPDVRDGLKP…ADGDLSMEDL (470 aa)). Catalysis depends on tyrosine 137, which acts as the O-(5'-phospho-DNA)-tyrosine intermediate. Residues 545–551 (QRRGGKG) carry the GyrA-box motif. Positions 861–922 (EANGDDELDE…TEPDPGESDG (62 aa)) are disordered. Acidic residues-rich tracts occupy residues 863–890 (NGDD…DESA) and 912–922 (DTEPDPGESDG).

The protein belongs to the type II topoisomerase GyrA/ParC subunit family. In terms of assembly, heterotetramer, composed of two GyrA and two GyrB chains. In the heterotetramer, GyrA contains the active site tyrosine that forms a transient covalent intermediate with DNA, while GyrB binds cofactors and catalyzes ATP hydrolysis.

The protein localises to the cytoplasm. It carries out the reaction ATP-dependent breakage, passage and rejoining of double-stranded DNA.. A type II topoisomerase that negatively supercoils closed circular double-stranded (ds) DNA in an ATP-dependent manner to modulate DNA topology and maintain chromosomes in an underwound state. Negative supercoiling favors strand separation, and DNA replication, transcription, recombination and repair, all of which involve strand separation. Also able to catalyze the interconversion of other topological isomers of dsDNA rings, including catenanes and knotted rings. Type II topoisomerases break and join 2 DNA strands simultaneously in an ATP-dependent manner. The chain is DNA gyrase subunit A from Nocardioides sp. (strain ATCC BAA-499 / JS614).